Reading from the N-terminus, the 492-residue chain is N-succinylglutamate 5-semialdehyde dehydrogenase (492 aa).

Residue 220–225 (GSASTG) participates in NAD(+) binding. Active-site residues include glutamate 243 and cysteine 277.

This sequence belongs to the aldehyde dehydrogenase family. AstD subfamily.

It catalyses the reaction N-succinyl-L-glutamate 5-semialdehyde + NAD(+) + H2O = N-succinyl-L-glutamate + NADH + 2 H(+). Its pathway is amino-acid degradation; L-arginine degradation via AST pathway; L-glutamate and succinate from L-arginine: step 4/5. Catalyzes the NAD-dependent reduction of succinylglutamate semialdehyde into succinylglutamate. The protein is N-succinylglutamate 5-semialdehyde dehydrogenase of Salmonella paratyphi C (strain RKS4594).